Reading from the N-terminus, the 183-residue chain is Adenine phosphoribosyltransferase (183 aa).

It belongs to the purine/pyrimidine phosphoribosyltransferase family. Homodimer.

It is found in the cytoplasm. It catalyses the reaction AMP + diphosphate = 5-phospho-alpha-D-ribose 1-diphosphate + adenine. The protein operates within purine metabolism; AMP biosynthesis via salvage pathway; AMP from adenine: step 1/1. Its function is as follows. Catalyzes a salvage reaction resulting in the formation of AMP, that is energically less costly than de novo synthesis. This Shewanella oneidensis (strain ATCC 700550 / JCM 31522 / CIP 106686 / LMG 19005 / NCIMB 14063 / MR-1) protein is Adenine phosphoribosyltransferase.